The primary structure comprises 312 residues: MKTNNEFRPQYLKDFIGKDQLKSNLKIYLNATKRLKSSFDHTLLHGLAGTGKTTLATIIANEMGVDCHMTQGNLLNKPVDIINLLSLIKENDVIFVDEIHACGLAAFETLYSVLEDFCIDISIGKDFNAKMTRLKVPHFTLIGATTMLGKIPEPLEERFGHVFYLSEYETSEIAAIILKNNQIHFQINLNDQEIDLIANSAKGIPRLANRLLKRVVDFKINGFDNIKNIFEKIQIYDFGLEEQDINYLNVLYQQENEIGLKSIAQILRLDQYTIETKIEPYLIQHHFINKNLRGRKITAKGIEFLKNNQLIK.

The large ATPase domain (RuvB-L) stretch occupies residues 1 to 168 (MKTNNEFRPQ…FGHVFYLSEY (168 aa)). Residues arginine 8, glycine 49, lysine 52, threonine 53, threonine 54, 115–117 (EDF), arginine 158, tyrosine 168, and arginine 206 each bind ATP. Threonine 53 serves as a coordination point for Mg(2+). The segment at 169 to 234 (ETSEIAAIIL…NIKNIFEKIQ (66 aa)) is small ATPAse domain (RuvB-S). The head domain (RuvB-H) stretch occupies residues 237-312 (DFGLEEQDIN…EFLKNNQLIK (76 aa)). DNA is bound by residues lysine 290 and arginine 295.

It belongs to the RuvB family. Homohexamer. Forms an RuvA(8)-RuvB(12)-Holliday junction (HJ) complex. HJ DNA is sandwiched between 2 RuvA tetramers; dsDNA enters through RuvA and exits via RuvB. An RuvB hexamer assembles on each DNA strand where it exits the tetramer. Each RuvB hexamer is contacted by two RuvA subunits (via domain III) on 2 adjacent RuvB subunits; this complex drives branch migration. In the full resolvosome a probable DNA-RuvA(4)-RuvB(12)-RuvC(2) complex forms which resolves the HJ.

It is found in the cytoplasm. The enzyme catalyses ATP + H2O = ADP + phosphate + H(+). The RuvA-RuvB-RuvC complex processes Holliday junction (HJ) DNA during genetic recombination and DNA repair, while the RuvA-RuvB complex plays an important role in the rescue of blocked DNA replication forks via replication fork reversal (RFR). RuvA specifically binds to HJ cruciform DNA, conferring on it an open structure. The RuvB hexamer acts as an ATP-dependent pump, pulling dsDNA into and through the RuvAB complex. RuvB forms 2 homohexamers on either side of HJ DNA bound by 1 or 2 RuvA tetramers; 4 subunits per hexamer contact DNA at a time. Coordinated motions by a converter formed by DNA-disengaged RuvB subunits stimulates ATP hydrolysis and nucleotide exchange. Immobilization of the converter enables RuvB to convert the ATP-contained energy into a lever motion, pulling 2 nucleotides of DNA out of the RuvA tetramer per ATP hydrolyzed, thus driving DNA branch migration. The RuvB motors rotate together with the DNA substrate, which together with the progressing nucleotide cycle form the mechanistic basis for DNA recombination by continuous HJ branch migration. Branch migration allows RuvC to scan DNA until it finds its consensus sequence, where it cleaves and resolves cruciform DNA. This Ureaplasma urealyticum serovar 10 (strain ATCC 33699 / Western) protein is Holliday junction branch migration complex subunit RuvB.